Here is a 354-residue protein sequence, read N- to C-terminus: Histidinol-phosphate aminotransferase (354 aa).

K210 is subject to N6-(pyridoxal phosphate)lysine.

It belongs to the class-II pyridoxal-phosphate-dependent aminotransferase family. Histidinol-phosphate aminotransferase subfamily. As to quaternary structure, homodimer. Pyridoxal 5'-phosphate serves as cofactor.

It carries out the reaction L-histidinol phosphate + 2-oxoglutarate = 3-(imidazol-4-yl)-2-oxopropyl phosphate + L-glutamate. The protein operates within amino-acid biosynthesis; L-histidine biosynthesis; L-histidine from 5-phospho-alpha-D-ribose 1-diphosphate: step 7/9. This chain is Histidinol-phosphate aminotransferase, found in Clostridium botulinum (strain Okra / Type B1).